Here is a 226-residue protein sequence, read N- to C-terminus: Low-molecular weight cobalt-containing nitrile hydratase subunit beta (226 aa).

The segment at 1 to 22 (MDGIHDLGGRAGLGPIKPESDE) is disordered.

This sequence belongs to the nitrile hydratase subunit beta family. Heterodimer of an alpha and a beta chain.

It catalyses the reaction an aliphatic primary amide = an aliphatic nitrile + H2O. Functionally, NHase catalyzes the hydration of various nitrile compounds to the corresponding amides. In Rhodococcus rhodochrous, this protein is Low-molecular weight cobalt-containing nitrile hydratase subunit beta.